The chain runs to 203 residues: Recombination protein RecR (203 aa).

The segment at 56–71 (CAVCGNVSDDERCRIC) adopts a C4-type zinc-finger fold. The region spanning 79 to 179 (SVVCVVEEPK…TVTRIASGLP (101 aa)) is the Toprim domain.

Belongs to the RecR family.

In terms of biological role, may play a role in DNA repair. It seems to be involved in an RecBC-independent recombinational process of DNA repair. It may act with RecF and RecO. In Mycobacterium avium (strain 104), this protein is Recombination protein RecR.